Here is a 157-residue protein sequence, read N- to C-terminus: Crossover junction endodeoxyribonuclease RuvC (157 aa).

Active-site residues include Asp7, Glu66, and Asp139. 3 residues coordinate Mg(2+): Asp7, Glu66, and Asp139.

It belongs to the RuvC family. Homodimer which binds Holliday junction (HJ) DNA. The HJ becomes 2-fold symmetrical on binding to RuvC with unstacked arms; it has a different conformation from HJ DNA in complex with RuvA. In the full resolvosome a probable DNA-RuvA(4)-RuvB(12)-RuvC(2) complex forms which resolves the HJ. Mg(2+) serves as cofactor.

The protein localises to the cytoplasm. The catalysed reaction is Endonucleolytic cleavage at a junction such as a reciprocal single-stranded crossover between two homologous DNA duplexes (Holliday junction).. The RuvA-RuvB-RuvC complex processes Holliday junction (HJ) DNA during genetic recombination and DNA repair. Endonuclease that resolves HJ intermediates. Cleaves cruciform DNA by making single-stranded nicks across the HJ at symmetrical positions within the homologous arms, yielding a 5'-phosphate and a 3'-hydroxyl group; requires a central core of homology in the junction. The consensus cleavage sequence is 5'-(A/T)TT(C/G)-3'. Cleavage occurs on the 3'-side of the TT dinucleotide at the point of strand exchange. HJ branch migration catalyzed by RuvA-RuvB allows RuvC to scan DNA until it finds its consensus sequence, where it cleaves and resolves the cruciform DNA. This Helicobacter acinonychis (strain Sheeba) protein is Crossover junction endodeoxyribonuclease RuvC.